We begin with the raw amino-acid sequence, 369 residues long: UDP-N-acetylglucosamine--N-acetylmuramyl-(pentapeptide) pyrophosphoryl-undecaprenol N-acetylglucosamine transferase (369 aa).

Residues 10–12 (TAG), Asn-124, Arg-166, Ser-196, Ile-251, and Gln-296 contribute to the UDP-N-acetyl-alpha-D-glucosamine site.

Belongs to the glycosyltransferase 28 family. MurG subfamily.

The protein localises to the cell membrane. The enzyme catalyses di-trans,octa-cis-undecaprenyl diphospho-N-acetyl-alpha-D-muramoyl-L-alanyl-D-glutamyl-meso-2,6-diaminopimeloyl-D-alanyl-D-alanine + UDP-N-acetyl-alpha-D-glucosamine = di-trans,octa-cis-undecaprenyl diphospho-[N-acetyl-alpha-D-glucosaminyl-(1-&gt;4)]-N-acetyl-alpha-D-muramoyl-L-alanyl-D-glutamyl-meso-2,6-diaminopimeloyl-D-alanyl-D-alanine + UDP + H(+). Its pathway is cell wall biogenesis; peptidoglycan biosynthesis. Cell wall formation. Catalyzes the transfer of a GlcNAc subunit on undecaprenyl-pyrophosphoryl-MurNAc-pentapeptide (lipid intermediate I) to form undecaprenyl-pyrophosphoryl-MurNAc-(pentapeptide)GlcNAc (lipid intermediate II). The sequence is that of UDP-N-acetylglucosamine--N-acetylmuramyl-(pentapeptide) pyrophosphoryl-undecaprenol N-acetylglucosamine transferase from Acetivibrio thermocellus (strain ATCC 27405 / DSM 1237 / JCM 9322 / NBRC 103400 / NCIMB 10682 / NRRL B-4536 / VPI 7372) (Clostridium thermocellum).